Consider the following 181-residue polypeptide: 6,7-dimethyl-8-ribityllumazine synthase (181 aa).

5-amino-6-(D-ribitylamino)uracil-binding positions include Phe23, 61-63 (SFE), and 85-87 (AVI). 90-91 (QT) lines the (2S)-2-hydroxy-3-oxobutyl phosphate pocket. His93 functions as the Proton donor in the catalytic mechanism. Phe118 is a binding site for 5-amino-6-(D-ribitylamino)uracil. Arg132 serves as a coordination point for (2S)-2-hydroxy-3-oxobutyl phosphate.

It belongs to the DMRL synthase family.

It carries out the reaction (2S)-2-hydroxy-3-oxobutyl phosphate + 5-amino-6-(D-ribitylamino)uracil = 6,7-dimethyl-8-(1-D-ribityl)lumazine + phosphate + 2 H2O + H(+). It participates in cofactor biosynthesis; riboflavin biosynthesis; riboflavin from 2-hydroxy-3-oxobutyl phosphate and 5-amino-6-(D-ribitylamino)uracil: step 1/2. Its function is as follows. Catalyzes the formation of 6,7-dimethyl-8-ribityllumazine by condensation of 5-amino-6-(D-ribitylamino)uracil with 3,4-dihydroxy-2-butanone 4-phosphate. This is the penultimate step in the biosynthesis of riboflavin. The sequence is that of 6,7-dimethyl-8-ribityllumazine synthase from Synechococcus elongatus (strain ATCC 33912 / PCC 7942 / FACHB-805) (Anacystis nidulans R2).